The following is a 364-amino-acid chain: GTPase Obg (364 aa).

Positions 1–159 (MKFVDEAYID…KSLKLELKVL (159 aa)) constitute an Obg domain. An OBG-type G domain is found at 160-334 (ADVGLLGMPN…LVKTIYQHVK (175 aa)). Residues 166-173 (GMPNAGKS), 191-195 (FTTLH), 213-216 (DLPG), 284-287 (NKLD), and 315-317 (SAL) contribute to the GTP site. Residues serine 173 and threonine 193 each contribute to the Mg(2+) site. The interval 337–364 (QKSEQPEEEVDPRFIELPPEPAKPASSD) is disordered.

It belongs to the TRAFAC class OBG-HflX-like GTPase superfamily. OBG GTPase family. As to quaternary structure, monomer. Requires Mg(2+) as cofactor.

The protein resides in the cytoplasm. An essential GTPase which binds GTP, GDP and possibly (p)ppGpp with moderate affinity, with high nucleotide exchange rates and a fairly low GTP hydrolysis rate. Plays a role in control of the cell cycle, stress response, ribosome biogenesis and in those bacteria that undergo differentiation, in morphogenesis control. This Polaromonas naphthalenivorans (strain CJ2) protein is GTPase Obg.